Reading from the N-terminus, the 609-residue chain is Wee1-like protein kinase (609 aa).

The segment covering Met1–Met10 has biased composition (basic and acidic residues). Disordered regions lie at residues Met1–Pro88 and Pro147–Pro166. 3 positions are modified to phosphoserine: Ser23, Ser25, and Ser27. The segment covering Arg37 to Pro48 has biased composition (basic and acidic residues). Residue Thr47 is modified to Phosphothreonine. Position 52 is a phosphoserine (Ser52). Polar residues predominate over residues Leu153–Thr165. Thr165 carries the post-translational modification Phosphothreonine. The residue at position 168 (Ser168) is a Phosphoserine. Residues Phe239 to Leu517 form the Protein kinase domain. ATP contacts are provided by residues Ile245 to Val253 and Lys268. Catalysis depends on Asp361, which acts as the Proton acceptor. Asn366 and Asp412 together coordinate Mg(2+).

This sequence belongs to the protein kinase superfamily. Ser/Thr protein kinase family. WEE1 subfamily. It depends on Mg(2+) as a cofactor. Post-translationally, phosphorylated during M and G1 phases. As to expression, expressed in embryos; expression remains high in the proliferating cells of the central nervous system well after cells in the rest of the embryo have ceased dividing.

The protein resides in the nucleus. The catalysed reaction is L-tyrosyl-[protein] + ATP = O-phospho-L-tyrosyl-[protein] + ADP + H(+). Negatively regulated by phosphorylation in the M-phase. Acts as a negative regulator of entry into mitosis (G2 to M transition). This kinase specifically phosphorylates and inactivates cyclin B1-complexed CDC2. In Drosophila melanogaster (Fruit fly), this protein is Wee1-like protein kinase.